Consider the following 330-residue polypeptide: Phenylalanine--tRNA ligase alpha subunit (330 aa).

Glu255 lines the Mg(2+) pocket.

Belongs to the class-II aminoacyl-tRNA synthetase family. Phe-tRNA synthetase alpha subunit type 1 subfamily. As to quaternary structure, tetramer of two alpha and two beta subunits. Mg(2+) is required as a cofactor.

The protein localises to the cytoplasm. The enzyme catalyses tRNA(Phe) + L-phenylalanine + ATP = L-phenylalanyl-tRNA(Phe) + AMP + diphosphate + H(+). The sequence is that of Phenylalanine--tRNA ligase alpha subunit from Acinetobacter baumannii (strain SDF).